A 589-amino-acid polypeptide reads, in one-letter code: ATP-dependent lipid A-core flippase (589 aa).

5 consecutive transmembrane segments (helical) span residues tryptophan 29–leucine 49, alanine 68–isoleucine 88, valine 157–leucine 177, leucine 254–alanine 274, and leucine 283–lysine 303. The region spanning valine 32–serine 314 is the ABC transmembrane type-1 domain. In terms of domain architecture, ABC transporter spans isoleucine 346–methionine 582. Residue glycine 380–serine 387 coordinates ATP.

It belongs to the ABC transporter superfamily. Lipid exporter (TC 3.A.1.106) family. Homodimer.

Its subcellular location is the cell inner membrane. It carries out the reaction ATP + H2O + lipid A-core oligosaccharideSide 1 = ADP + phosphate + lipid A-core oligosaccharideSide 2.. Involved in lipopolysaccharide (LPS) biosynthesis. Translocates lipid A-core from the inner to the outer leaflet of the inner membrane. Transmembrane domains (TMD) form a pore in the inner membrane and the ATP-binding domain (NBD) is responsible for energy generation. The sequence is that of ATP-dependent lipid A-core flippase from Xylella fastidiosa (strain 9a5c).